The sequence spans 287 residues: NAD kinase (287 aa).

Residue Asp-66 is the Proton acceptor of the active site. NAD(+) contacts are provided by residues 66 to 67, 137 to 138, Arg-148, Arg-165, Asp-167, and 178 to 183; these read DG, ND, and TAYSMS.

The protein belongs to the NAD kinase family. The cofactor is a divalent metal cation.

Its subcellular location is the cytoplasm. It catalyses the reaction NAD(+) + ATP = ADP + NADP(+) + H(+). Involved in the regulation of the intracellular balance of NAD and NADP, and is a key enzyme in the biosynthesis of NADP. Catalyzes specifically the phosphorylation on 2'-hydroxyl of the adenosine moiety of NAD to yield NADP. In Chlorobium limicola (strain DSM 245 / NBRC 103803 / 6330), this protein is NAD kinase.